The chain runs to 160 residues: Major pollen allergen Cor a 1 isoforms 5, 6, 11 and 16 (160 aa).

This sequence belongs to the BetVI family.

The sequence is that of Major pollen allergen Cor a 1 isoforms 5, 6, 11 and 16 from Corylus avellana (European hazel).